Consider the following 1982-residue polypeptide: MGNINSICLNNNGKYRIDSISCSLEGCKLNSKELVENMVALVDKYPLTQLLIIRECKLKQIPVNITNLSNLSELILSDNKLSQLPWSLPPPFKPNTLLSMASITNENLVRLDLSNNRFTEFPSSVFVLPNLKQLILCNNQLTNMNVTLCGGTSNNNGAHQPHIACQLEELKLSNNNFTIFPSIIGDQLTTLKSLDLSGNTITSLPNSFSNLVSLTSLNLKSNKFTCFPPSLCTLDKLVHLNLSCNQILVSPSDHTLGVSLLPSLEKLELQHNRFAHFPMDILEIVSLRVLKLQDNDIDKIPDKIGNLLNLNELFLSENKITQLPSTIGELINLRKLYLEYNKIGSLPQEFSKLSKLNILILHNNDLKFVPDQLHSLSQLLRLSLDENQLSSSDQKLIKSEGSLALIKRKNKLNYGSTMNGTGTTSSSGSASTSTHGSINKTTDILLSSVTLNNSILNQINNNNNNNNNNNNNNNNNNNSSNNNSGTNSLSSTPNGTGKSKKKLTHLTISRSLFRGNSSNLESEKEDFINKKQQQQQQQQQQQQQQQQQQQQQQQQQQQQQQQQQQLGSTASPSTASPITSHITVNSTVLDFEDDIQKMQLGLEALSNLETSIGSNNSGGGDSMNGSGGNINNSGGSGSGCGTISGSTTKQRRGSVFLPPTNAFKLSPNVVSSSYNTLPASVMSGLLQQQNLENGGVGSGSGSGSPIISANSICNSNSSSSNSLLKPPIINTTNLSTSPNLLSQSSTSFLNLPPLNQSSTNSFLPPQHQHHHHHSNLSQSLSINNLAHRLPTSLSSSSLSSNNTYDSLQFQQQQQHHHHNHNNHQNSNQPLATIVPSFSKFKNSFDQLLEEQDFSKKKRETLQKLSKEQKWNLLLQYRNSTLNMLNMKEHSNNSNNNQSIKNSTIIASTTTTTTTNGESLDGSSIQQQITKNSNFQSSRFYIDNLTSKTDISLVKEVHDFLKESGPEVSIFIGMGGIESLLGILQFNLDNAQLQFDEEKVGYCLLCLKILVECTAKSVITTNNSLNLVTMFLTSASKYIIDIIIDIYDELLRLQVIGVSVVLDSLINFQKVKGLSSPYVPLVALLRNPIIEMPTKTTVFKIINFLIYSFSVLEERFSVICSLLKVGILEVIGMFRALPHTSYSLRFELDLFEEVLDSDESELVKKIGRKEVLKRMSNEDNDLSKQSSKQSMDFVRVVMVSAGYGDLKIDLDERTSYANVIDFIQSNYQIKYSIDRYGLFVPAIGSLVLDGSILQSSGSQSRWVDPSKSLIDNGLSNEIVEFKMKPMQIQVLQSVVVVVATNHQKEDIIKEFTIDPQLKCFEIVQYLRTRLDSSSPAFQRKISVLTEDEDEDYESDIYGVYCFSSLESYDQGSWYPLNSRFLDFNPTNTPTIIDVKLMERPLRVLFSGTEKLMKFNPYVPVSELIKEIKNEIHLKINIEDYGISYVPNVSSSNLSSLIIEETWLDPTKTLLDHNDMKCSVVQFKFKPRTVSVMVLVESGIEIPTTDTPYQFVNTNSISEIIEKICTPHQLNPLSHSLYISDCQGQKIKLLSRQNCLRDQQVNNGDHLIITSKQKDLPSDFNVWDEPNDSSETITYSKDRRVSSVTLNKLIEKLTSPEYTQDSEMKTIFLSSYRSIITPSVLLSKLMERHTIPTLVDKERGKLIQRKTRLLIKSWLELETTKNREEVITLLVQNMPAQSIEDDGLKELTELFVDLSTKSYSSILPIVIGELPKCKIPKIIDSYVTFADMDEIEIARQLSLLTFPLYSRIETSELLNQRWSKPGGGPNIMSVVGLFNKISNWVSFTIVNQPKLRDRAVVYGKMVKIANAFYELRNYHLLMAIISGLNASPVLRLKYTKGKLSKNLKDNLDTLEELMSTQSSMKNYRADLAAASPPAIPFMGFHLSDLVFIDEGNQQLCDSRINFKKLEMYKKTIATLQNFSLFPYQFTPVPIIQNYFLDYKIVADKPIYEMSLSAEPRNAERYDIQ.

15 LRR repeats span residues 1-26 (MGNI…SLEG), 47-68 (LTQL…ITNL), 69-94 (SNLS…PFKP), 105-128 (NENL…VFVL), 130-151 (NLKQ…LCGG), 164-187 (ACQL…IGDQ), 188-210 (LTTL…SFSN), 212-234 (VSLT…LCTL), 236-257 (KLVH…HTLG), 261-284 (LPSL…ILEI), 286-307 (SLRV…IGNL), 308-330 (LNLN…IGEL), 331-352 (INLR…EFSK), 354-376 (SKLN…LHSL), and 378-399 (QLLR…LIKS). Residues 1–1831 (MGNINSICLN…IANAFYELRN (1831 aa)) are Extracellular-facing. 3 disordered regions span residues 414–436 (YGST…STHG), 457–532 (NQIN…NKKQ), and 615–654 (NNSG…RRGS). Low complexity-rich tracts occupy residues 415-436 (GSTM…STHG) and 457-495 (NQIN…TPNG). Residues 443–466 (DILLSSVTLNNSILNQINNNNNNN) form an LRR 16 repeat. Residues 506 to 520 (LTISRSLFRGNSSNL) are compositionally biased toward polar residues. The stretch at 515–567 (GNSSNLESEKEDFINKKQQQQQQQQQQQQQQQQQQQQQQQQQQQQQQQQQQLG) forms a coiled coil. The stretch at 592–615 (EDDIQKMQLGLEALSNLETSIGSN) is one LRR 17 repeat. The span at 616–642 (NSGGGDSMNGSGGNINNSGGSGSGCGT) shows a compositional bias: gly residues. 2 LRR repeats span residues 657–684 (LPPT…VMSG) and 773–796 (HSNL…LSSS). Disordered stretches follow at residues 756 to 778 (QSST…NLSQ) and 807 to 829 (LQFQ…SNQP). Positions 832-1236 (TIVPSFSKFK…QIKYSIDRYG (405 aa)) constitute a GBD/FH3 domain. LRR repeat units lie at residues 979 to 1003 (LLGI…GYCL), 1075 to 1100 (SPYV…VFKI), 1239 to 1263 (VPAI…RWVD), and 1689 to 1712 (VQNM…FVDL). Residues 1595-1717 (KDRRVSSVTL…LFVDLSTKSY (123 aa)) enclose the N-terminal Ras-GEF domain. The 228-residue stretch at 1747–1974 (DEIEIARQLS…YEMSLSAEPR (228 aa)) folds into the Ras-GEF domain. The helical transmembrane segment at 1832 to 1848 (YHLLMAIISGLNASPVL) threads the bilayer. The Cytoplasmic segment spans residues 1849–1982 (RLKYTKGKLS…PRNAERYDIQ (134 aa)). LRR repeat units follow at residues 1865–1888 (LDTL…LAAA) and 1917–1941 (RINF…LFPY).

The protein resides in the membrane. In terms of biological role, promotes the exchange of Ras-bound GDP by GTP. This is Ras guanine nucleotide exchange factor V (gefV) from Dictyostelium discoideum (Social amoeba).